We begin with the raw amino-acid sequence, 327 residues long: Putative cyclin-dependent kinase F-2 (327 aa).

One can recognise a Protein kinase domain in the interval 4–295 (YECLGKIGEG…AADALRCAWF (292 aa)). Residues 10–18 (IGEGAAGVV) and Lys-33 each bind ATP. Asp-134 acts as the Proton acceptor in catalysis. Thr-167 carries the phosphothreonine modification.

It belongs to the protein kinase superfamily. CMGC Ser/Thr protein kinase family. CDC2/CDKX subfamily.

The enzyme catalyses L-seryl-[protein] + ATP = O-phospho-L-seryl-[protein] + ADP + H(+). It catalyses the reaction L-threonyl-[protein] + ATP = O-phospho-L-threonyl-[protein] + ADP + H(+). It carries out the reaction [DNA-directed RNA polymerase] + ATP = phospho-[DNA-directed RNA polymerase] + ADP + H(+). The polypeptide is Putative cyclin-dependent kinase F-2 (CDKF-2) (Oryza sativa subsp. japonica (Rice)).